We begin with the raw amino-acid sequence, 234 residues long: Viral Fc-gamma receptor-like protein IR11 (234 aa).

An N-terminal signal peptide occupies residues 1 to 23 (MQTYSTPLTLVIVTSLFLFTTQG). An Ig-like V-type domain is found at 24-122 (SSSNAVEPTK…VKDTGVYLLQ (99 aa)). Topologically, residues 24–182 (SSSNAVEPTK…DLKRQWSGLS (159 aa)) are extracellular. Asparagine 57, asparagine 105, and asparagine 110 each carry an N-linked (GlcNAc...) asparagine; by host glycan. A helical membrane pass occupies residues 183–203 (LHCAWVSGMMIFVGALVICFL). The Cytoplasmic portion of the chain corresponds to 204–234 (RSQRIGEQDAEHLRTDLDTEPLLLTVDGDLQ).

It belongs to the RL11 family.

The protein resides in the membrane. The sequence is that of Viral Fc-gamma receptor-like protein IR11 from Homo sapiens (Human).